The sequence spans 447 residues: Tubulin beta chain (447 aa).

Residues Gln11, Glu69, Ser138, Gly142, Thr143, Gly144, Asn204, and Asn226 each coordinate GTP. Residue Glu69 coordinates Mg(2+). The tract at residues 424-447 (QYQEASVSEGEEEYDEEAPLEGEE) is disordered. Residues 432-447 (EGEEEYDEEAPLEGEE) are compositionally biased toward acidic residues.

This sequence belongs to the tubulin family. Dimer of alpha and beta chains. A typical microtubule is a hollow water-filled tube with an outer diameter of 25 nm and an inner diameter of 15 nM. Alpha-beta heterodimers associate head-to-tail to form protofilaments running lengthwise along the microtubule wall with the beta-tubulin subunit facing the microtubule plus end conferring a structural polarity. Microtubules usually have 13 protofilaments but different protofilament numbers can be found in some organisms and specialized cells. It depends on Mg(2+) as a cofactor.

Its subcellular location is the cytoplasm. The protein localises to the cytoskeleton. Its function is as follows. Tubulin is the major constituent of microtubules, a cylinder consisting of laterally associated linear protofilaments composed of alpha- and beta-tubulin heterodimers. Microtubules grow by the addition of GTP-tubulin dimers to the microtubule end, where a stabilizing cap forms. Below the cap, tubulin dimers are in GDP-bound state, owing to GTPase activity of alpha-tubulin. This is Tubulin beta chain (TUB1) from Dothistroma septosporum (Red band needle blight fungus).